Consider the following 518-residue polypeptide: Membrane-bound lytic murein transglycosylase F (518 aa).

An N-terminal signal peptide occupies residues 1–21 (MKKLKINYLFIGILALLLAVA). The interval 22-269 (LWPSIPWFGK…RIEEKYLGHG (248 aa)) is non-LT domain. An LT domain region spans residues 270–518 (DDFDYVDTRT…SRKGSEEKQN (249 aa)). Residue Glu314 is part of the active site.

This sequence in the N-terminal section; belongs to the bacterial solute-binding protein 3 family. The protein in the C-terminal section; belongs to the transglycosylase Slt family.

The protein resides in the cell outer membrane. It carries out the reaction Exolytic cleavage of the (1-&gt;4)-beta-glycosidic linkage between N-acetylmuramic acid (MurNAc) and N-acetylglucosamine (GlcNAc) residues in peptidoglycan, from either the reducing or the non-reducing ends of the peptidoglycan chains, with concomitant formation of a 1,6-anhydrobond in the MurNAc residue.. Murein-degrading enzyme that degrades murein glycan strands and insoluble, high-molecular weight murein sacculi, with the concomitant formation of a 1,6-anhydromuramoyl product. Lytic transglycosylases (LTs) play an integral role in the metabolism of the peptidoglycan (PG) sacculus. Their lytic action creates space within the PG sacculus to allow for its expansion as well as for the insertion of various structures such as secretion systems and flagella. This Shigella sonnei (strain Ss046) protein is Membrane-bound lytic murein transglycosylase F.